Consider the following 367-residue polypeptide: Porin Omp2a (367 aa).

Residues 1 to 22 form the signal peptide; that stretch reads MNIKSLLLGSAAALVAASGAQA.

This sequence belongs to the alphaproteobacteria porin family. In terms of assembly, monomer.

It is found in the cell outer membrane. Forms passive diffusion pores that allow small molecular weight hydrophilic materials across the outer membrane. This chain is Porin Omp2a (omp2a), found in Brucella canis (strain ATCC 23365 / NCTC 10854 / RM-666).